The sequence spans 469 residues: Keratin, type I cytoskeletal 26 (469 aa).

The tract at residues 1 to 82 is head; the sequence is MSFRLSSGSR…ENEHGLLPGN (82 aa). Residues 83-118 are coil 1A; sequence EKVTLQNLNDRLASYLDHVCTLEEANADLEQKIKGW. The IF rod domain maps to 83-398; sequence EKVTLQNLND…KLIDGEGRKS (316 aa). The interval 119 to 140 is linker 1; sequence YEKYGPGSGRQLAYDCSKYFSV. Residues 141–232 are coil 1B; that stretch reads TEDLKRQIIS…KNHQEEMKVM (92 aa). The linker 12 stretch occupies residues 233–255; sequence QGAAGGNVNVEINAAPGVDLTVL. The segment at 256-394 is coil 2; the sequence is LNNMRAEYED…EMYCKLIDGE (139 aa). Positions 395 to 465 are tail; that stretch reads GRKSKSTYCK…NITMEQRLPS (71 aa). Disordered stretches follow at residues 398-421 and 450-469; these read SKST…KDSK and KSSK…KVPQ. Residues 405–421 are compositionally biased toward basic and acidic residues; the sequence is SEGRGPKNSENQVKDSK.

It belongs to the intermediate filament family. In terms of assembly, heterotetramer of two type I and two type II keratins.

The protein is Keratin, type I cytoskeletal 26 of Bos taurus (Bovine).